Reading from the N-terminus, the 355-residue chain is MSFSDNLAKILDKYDNLGKKLSSGIMGDEFVKASKEYAELEDVVVKIKEYNKAKSELEEANNFKLELGFDNATLAMIEDEIHILENSLPKLERAVKIALLPKDDADSKSAIIEVRAGSGGEEAALFAAVLFNMYQRYAELKGWRFEILAISDTGIGGYKEASASIKGKDVFSKLKFESGVHRVQRVPETESQGRIHTSAATVAVLPEAEEVDIKIEDKDLRIDTYRASGAGGQHVNTTDSAVRITHIPTGITVALQDEKSQHKNKAKALKILRARIYEEERRNKEQERADSRRGQIGSGDRSERIRTYNFPQGRVSDHRINLTLYKIDEVVKNGQLDEFIEALIAEDEAKKLSEI.

Q233 carries the post-translational modification N5-methylglutamine. Residues 281 to 293 show a composition bias toward basic and acidic residues; it reads RRNKEQERADSRR. The disordered stretch occupies residues 281-308; it reads RRNKEQERADSRRGQIGSGDRSERIRTY.

This sequence belongs to the prokaryotic/mitochondrial release factor family. In terms of processing, methylated by PrmC. Methylation increases the termination efficiency of RF1.

Its subcellular location is the cytoplasm. Functionally, peptide chain release factor 1 directs the termination of translation in response to the peptide chain termination codons UAG and UAA. This is Peptide chain release factor 1 from Rickettsia akari (strain Hartford).